The sequence spans 606 residues: Acetylcholinesterase (606 aa).

The first 28 residues, 1-28 (MPSCQPGKMPAPWPWWLQLLLCIPSCVA), serve as a signal peptide directing secretion. Cys98 and Cys125 are oxidised to a cystine. Ser231 (acyl-ester intermediate) is an active-site residue. Cys285 and Cys296 are joined by a disulfide. N-linked (GlcNAc...) asparagine glycosylation is present at Asn289. Residue Glu358 is the Charge relay system of the active site. A glycan (N-linked (GlcNAc...) asparagine) is linked at Asn374. Cysteines 433 and 552 form a disulfide. The active-site Charge relay system is His471. An N-linked (GlcNAc...) asparagine glycan is attached at Asn484.

Belongs to the type-B carboxylesterase/lipase family. As to quaternary structure, isoform S is monomeric. Isoform T can form oligomers, including collagen-tailed forms. Post-translationally, the N-terminus is blocked. Liver and muscle contain both isoform T and isoform S. Venom gland predominantly contains isoform S.

Its subcellular location is the synapse. It localises to the secreted. It is found in the cell membrane. The catalysed reaction is acetylcholine + H2O = choline + acetate + H(+). Inhibited by active site inhibitors: edrophonium, trimethyl-(m-acetamidopheny1)-ammonium iodide, and trimethyl-(p-acetarnidopheny1)-ammonium iodide. Inhibited by both active and peripheral site inhibitors: decamethonium, and BW284c51. Inhibited by peripheral site inhibitors: snake acetylcholinesterase fasciculin-2, propidium, gallamine, D-tubocurarine, and tacrine. Also inhibited by antibodies Elec410 and Fab410. In terms of biological role, in muscle, it terminates signal transduction at the neuromuscular junction by rapid hydrolysis of the acetylcholine released into the synaptic cleft. In liver, its function is unclear: it could serve as a safeguard against any diffusion of acetylcholine from synapses into the circulation. In venom, its toxic role is unclear: it could result in less musculatory control by rapidly hydrolyzing acetylcholine, or that it works synergistically with alkaline phosphatase (ALP) in paralyzing prey through hypotension. This Bungarus fasciatus (Banded krait) protein is Acetylcholinesterase (ACHE).